We begin with the raw amino-acid sequence, 162 residues long: Succinate dehydrogenase assembly factor 2-A, mitochondrial (162 aa).

The N-terminal 23 residues, 1–23 (MLRQLRLTMDISGWIFLPWRRSM), are a transit peptide targeting the mitochondrion.

Belongs to the SDHAF2 family. As to quaternary structure, interacts with the flavoprotein subunit within the SDH catalytic dimer.

The protein localises to the mitochondrion matrix. Plays an essential role in the assembly of succinate dehydrogenase (SDH), an enzyme complex (also referred to as respiratory complex II) that is a component of both the tricarboxylic acid (TCA) cycle and the mitochondrial electron transport chain, and which couples the oxidation of succinate to fumarate with the reduction of ubiquinone (coenzyme Q) to ubiquinol. Required for flavinylation (covalent attachment of FAD) of the flavoprotein subunit of the SDH catalytic dimer. The protein is Succinate dehydrogenase assembly factor 2-A, mitochondrial of Drosophila erecta (Fruit fly).